The chain runs to 266 residues: Coiled-coil domain-containing glutamate-rich protein 2 (266 aa).

The N-terminal stretch at 1-23 (MPPRGPASELLLLRLLLLGAATA) is a signal peptide. Composition is skewed to basic and acidic residues over residues 90 to 100 (EAGKMRSSQEV), 154 to 188 (LWQR…EKGV), 204 to 213 (GGGERREDLP), and 221 to 266 (QPEA…RREG). Positions 90–266 (EAGKMRSSQE…TLGEQLRREG (177 aa)) are disordered.

As to expression, expressed at higher levels in fetal brain and skeletal muscle. Lower expression is detected in fetal kidney, liver, spleen, thymus, heart and lung.

Its subcellular location is the secreted. The sequence is that of Coiled-coil domain-containing glutamate-rich protein 2 (CCER2) from Homo sapiens (Human).